A 514-amino-acid chain; its full sequence is Bifunctional purine biosynthesis protein PurH (514 aa).

Residues 1–145 (MIKRALISVS…KNYQDVAVIV (145 aa)) enclose the MGS-like domain.

The protein belongs to the PurH family.

The enzyme catalyses (6R)-10-formyltetrahydrofolate + 5-amino-1-(5-phospho-beta-D-ribosyl)imidazole-4-carboxamide = 5-formamido-1-(5-phospho-D-ribosyl)imidazole-4-carboxamide + (6S)-5,6,7,8-tetrahydrofolate. It catalyses the reaction IMP + H2O = 5-formamido-1-(5-phospho-D-ribosyl)imidazole-4-carboxamide. Its pathway is purine metabolism; IMP biosynthesis via de novo pathway; 5-formamido-1-(5-phospho-D-ribosyl)imidazole-4-carboxamide from 5-amino-1-(5-phospho-D-ribosyl)imidazole-4-carboxamide (10-formyl THF route): step 1/1. It functions in the pathway purine metabolism; IMP biosynthesis via de novo pathway; IMP from 5-formamido-1-(5-phospho-D-ribosyl)imidazole-4-carboxamide: step 1/1. This chain is Bifunctional purine biosynthesis protein PurH, found in Ruminiclostridium cellulolyticum (strain ATCC 35319 / DSM 5812 / JCM 6584 / H10) (Clostridium cellulolyticum).